The chain runs to 725 residues: ATP-dependent DNA helicase II subunit 2 (725 aa).

A Ku domain is found at 232–478 (LTLGDPQKYP…QQAMSDYVDA (247 aa)).

This sequence belongs to the ku80 family. Heterodimer of mus-51/ku70 and mus-52/ku80.

It is found in the nucleus. It localises to the chromosome. Its subcellular location is the telomere. It carries out the reaction ATP + H2O = ADP + phosphate + H(+). Functionally, single-stranded DNA-dependent ATP-dependent helicase. Involved in non-homologous end joining (NHEJ) DNA double strand break repair. DNA-binding is sequence-independent but has a high affinity to nicks in double-stranded DNA and to the ends of duplex DNA. Binds to naturally occurring chromosomal ends, and therefore provides chromosomal end protection. Required also for telomere recombination to repair telomeric ends in the absence of telomerase. ku70, of the ku70/ku80 heterodimer, binds to the stem loop of tlc1, the RNA component of telomerase. Involved in telomere maintenance. Interacts with telomeric repeats and subtelomeric sequences thereby controlling telomere length and protecting against subtelomeric rearrangement. Maintains telomeric chromatin, which is involved in silencing the expression of genes located at the telomere. Required for mating-type switching. The chain is ATP-dependent DNA helicase II subunit 2 (mus-52) from Neurospora crassa (strain ATCC 24698 / 74-OR23-1A / CBS 708.71 / DSM 1257 / FGSC 987).